A 57-amino-acid polypeptide reads, in one-letter code: Small ribosomal subunit protein bS21 (57 aa).

The span at 32–42 shows a compositional bias: basic and acidic residues; it reads VRRREHYEKPS. Residues 32–57 form a disordered region; the sequence is VRRREHYEKPSQRRKRKLEASRRRRR. Residues 43–57 are compositionally biased toward basic residues; sequence QRRKRKLEASRRRRR.

It belongs to the bacterial ribosomal protein bS21 family.

In Synechococcus elongatus (strain ATCC 33912 / PCC 7942 / FACHB-805) (Anacystis nidulans R2), this protein is Small ribosomal subunit protein bS21.